Consider the following 211-residue polypeptide: Protein-L-isoaspartate O-methyltransferase (211 aa).

Residue Ser62 is part of the active site.

The protein belongs to the methyltransferase superfamily. L-isoaspartyl/D-aspartyl protein methyltransferase family.

The protein resides in the cytoplasm. The enzyme catalyses [protein]-L-isoaspartate + S-adenosyl-L-methionine = [protein]-L-isoaspartate alpha-methyl ester + S-adenosyl-L-homocysteine. In terms of biological role, catalyzes the methyl esterification of L-isoaspartyl residues in peptides and proteins that result from spontaneous decomposition of normal L-aspartyl and L-asparaginyl residues. It plays a role in the repair and/or degradation of damaged proteins. This Shewanella pealeana (strain ATCC 700345 / ANG-SQ1) protein is Protein-L-isoaspartate O-methyltransferase.